The sequence spans 141 residues: ATP synthase epsilon chain (141 aa).

It belongs to the ATPase epsilon chain family. As to quaternary structure, F-type ATPases have 2 components, CF(1) - the catalytic core - and CF(0) - the membrane proton channel. CF(1) has five subunits: alpha(3), beta(3), gamma(1), delta(1), epsilon(1). CF(0) has three main subunits: a, b and c.

It is found in the cell inner membrane. In terms of biological role, produces ATP from ADP in the presence of a proton gradient across the membrane. The sequence is that of ATP synthase epsilon chain from Burkholderia thailandensis (strain ATCC 700388 / DSM 13276 / CCUG 48851 / CIP 106301 / E264).